Consider the following 99-residue polypeptide: C-C motif chemokine 17 (99 aa).

The signal sequence occupies residues 1 to 23 (MIPLKMLLLVTLLLGASLQVTHA). 2 disulfide bridges follow: cysteine 33/cysteine 57 and cysteine 34/cysteine 73.

Belongs to the intercrine beta (chemokine CC) family. Expressed in thymus, spleen, lymph node, lung and heart.

The protein resides in the secreted. Chemokine, which displays chemotactic activity for T lymphocytes, preferentially Th2 cells, but not monocytes or granulocytes. Therefore plays an important role in a wide range of inflammatory and immunological processes. Acts by binding to CCR4 at T-cell surface. Mediates GM-CSF/CSF2-driven pain and inflammation. In the brain, required to maintain the typical, highly branched morphology of hippocampal microglia under homeostatic conditions. May be important for the appropriate adaptation of microglial morphology and synaptic plasticity to acute lipopolysaccharide (LPS)-induced neuroinflammation. Plays a role in wound healing, mainly by inducing fibroblast migration into the wound. This Canis lupus familiaris (Dog) protein is C-C motif chemokine 17 (CCL17).